A 390-amino-acid polypeptide reads, in one-letter code: 8-demethyl-8-(2-methoxy-alpha-L-rhamnosyl)-tetracenomycin-C 3'-O-methyltransferase (390 aa).

S-adenosyl-L-methionine contacts are provided by residues 202-208, Ser-217, Asp-234, 252-253, and Asp-275; these read ELGIGGY and SQ. Asp-275 lines the Mg(2+) pocket. His-278 (proton acceptor) is an active-site residue. Mg(2+)-binding residues include Glu-303 and Asp-304.

This sequence belongs to the methyltransferase OleY/MycE family. It depends on Mg(2+) as a cofactor.

The enzyme catalyses 8-demethyl-8-(2-O-methyl-alpha-L-rhamnosyl)-tetracenomycin C + S-adenosyl-L-methionine = 8-demethyl-8-(2,3-di-O-methyl-alpha-L-rhamnosyl)-tetracenomycin C + S-adenosyl-L-homocysteine + H(+). It functions in the pathway antibiotic biosynthesis. O-methyltransferase involved in the biosynthesis of the permethylated L-rhamnose moiety of elloramycin, an antitumor polyketide. Mediates the methylation of the hydroxy groups at the 3'-position after the sugar moiety has been attached to the aglycon. This chain is 8-demethyl-8-(2-methoxy-alpha-L-rhamnosyl)-tetracenomycin-C 3'-O-methyltransferase, found in Streptomyces olivaceus.